The following is a 508-amino-acid chain: Citrate lyase alpha chain (508 aa).

In terms of assembly, oligomer with a subunit composition of (alpha,beta,gamma)6.

It localises to the cytoplasm. It carries out the reaction citrate = oxaloacetate + acetate. The enzyme catalyses citrate + acetyl-CoA = (3S)-citryl-CoA + acetate. Functionally, represents a citrate:acetyl-ACP transferase. The polypeptide is Citrate lyase alpha chain (citF) (Klebsiella pneumoniae).